We begin with the raw amino-acid sequence, 82 residues long: UPF0180 protein BT9727_1277 (82 aa).

It belongs to the UPF0180 family.

The chain is UPF0180 protein BT9727_1277 from Bacillus thuringiensis subsp. konkukian (strain 97-27).